Consider the following 159-residue polypeptide: RNA pyrophosphohydrolase (159 aa).

The 144-residue stretch at 6–149 (GFRPNVGIIL…KREVYRRALK (144 aa)) folds into the Nudix hydrolase domain. Residues 38–59 (GGINPQETPEDALYRELNEEVG) carry the Nudix box motif.

This sequence belongs to the Nudix hydrolase family. RppH subfamily. It depends on a divalent metal cation as a cofactor.

Functionally, accelerates the degradation of transcripts by removing pyrophosphate from the 5'-end of triphosphorylated RNA, leading to a more labile monophosphorylated state that can stimulate subsequent ribonuclease cleavage. The protein is RNA pyrophosphohydrolase of Pseudomonas savastanoi pv. phaseolicola (strain 1448A / Race 6) (Pseudomonas syringae pv. phaseolicola (strain 1448A / Race 6)).